Consider the following 313-residue polypeptide: Aspartate carbamoyltransferase catalytic subunit (313 aa).

Carbamoyl phosphate-binding residues include R58 and T59. K86 serves as a coordination point for L-aspartate. Carbamoyl phosphate is bound by residues R108, H136, and Q139. Residues R169 and R223 each coordinate L-aspartate. 2 residues coordinate carbamoyl phosphate: G264 and P265.

This sequence belongs to the aspartate/ornithine carbamoyltransferase superfamily. ATCase family. In terms of assembly, heterododecamer (2C3:3R2) of six catalytic PyrB chains organized as two trimers (C3), and six regulatory PyrI chains organized as three dimers (R2).

It carries out the reaction carbamoyl phosphate + L-aspartate = N-carbamoyl-L-aspartate + phosphate + H(+). The protein operates within pyrimidine metabolism; UMP biosynthesis via de novo pathway; (S)-dihydroorotate from bicarbonate: step 2/3. Functionally, catalyzes the condensation of carbamoyl phosphate and aspartate to form carbamoyl aspartate and inorganic phosphate, the committed step in the de novo pyrimidine nucleotide biosynthesis pathway. This is Aspartate carbamoyltransferase catalytic subunit from Halothermothrix orenii (strain H 168 / OCM 544 / DSM 9562).